The chain runs to 179 residues: Gamma-crystallin S (179 aa).

Serine 2 carries the N-acetylserine modification. Positions 2–5 (SKTG) are N-terminal arm. 2 Beta/gamma crystallin 'Greek key' domains span residues 6-44 (TKITFYEDKNFQGRRYDCDCDCSDFHTYLSRCNSIRVEG) and 45-87 (GTWA…RALH). Residues 88-93 (LSSGGQ) form a connecting peptide region. Beta/gamma crystallin 'Greek key' domains follow at residues 94–134 (YKIQ…KVLD) and 135–177 (GAWI…RRIV).

It belongs to the beta/gamma-crystallin family. Monomer.

Its function is as follows. Crystallins are the dominant structural components of the vertebrate eye lens. This chain is Gamma-crystallin S (CRYGS), found in Oryctolagus cuniculus (Rabbit).